We begin with the raw amino-acid sequence, 419 residues long: UPF0229 protein Tbd_1233 (419 aa).

The segment at 85–108 is disordered; the sequence is GDRIDRPAGEGGGGSGGSPDGEGM. A compositionally biased stretch (gly residues) spans 93-104; that stretch reads GEGGGGSGGSPD.

Belongs to the UPF0229 family.

The protein is UPF0229 protein Tbd_1233 of Thiobacillus denitrificans (strain ATCC 25259 / T1).